A 304-amino-acid chain; its full sequence is MGFYSLKQLLLLYIIIMALFSDLKLAKSSSPEYTNLIYKGCARQRLSDPSGLYSQALSAMYGLLVTQSTKTRFYKTTTGTTSQTSVTGLFQCRGDLSNNDCYNCVSRLPVLSGKLCGKTIAARVQLSGCYLLYEISGFAQISGMELLFKTCGKNNVAGTGFEQRRDTAFGVMQNGVVQGHGFYATTYESVYVLGQCEGDIGDSDCSGCIKNALQRAQVECGSSISGQIYLHKCFVGYSFYPNGVPKRSSPYPSSGSSGSSSSSSSSGTTGKTVAIIVGGTAGVGFLVICLLFVKNLMKKKYDDY.

Residues 1–26 (MGFYSLKQLLLLYIIIMALFSDLKLA) form the signal peptide. Over 27-272 (KSSSPEYTNL…SSSSGTTGKT (246 aa)) the chain is Extracellular. Gnk2-homologous domains follow at residues 34-138 (TNLI…ISGF) and 143-242 (GMEL…FYPN). Cystine bridges form between cysteine 41-cysteine 116, cysteine 92-cysteine 101, cysteine 104-cysteine 129, cysteine 151-cysteine 220, cysteine 196-cysteine 205, and cysteine 208-cysteine 233. Residues 273–293 (VAIIVGGTAGVGFLVICLLFV) form a helical membrane-spanning segment. The necessary and sufficient for plasmodesmal targeting stretch occupies residues 273-293 (VAIIVGGTAGVGFLVICLLFV). Residues 294 to 304 (KNLMKKKYDDY) are Cytoplasmic-facing.

It belongs to the cysteine-rich repeat secretory protein family. Plasmodesmata-located proteins (PDLD) subfamily. As to quaternary structure, (Microbial infection) Interacts with Grapevine fanleaf virus (GFLV) 2B-MP. Highly expressed in inflorescence pedacel and shoot apex. Expressed in the outermost L1 layer of the shoot apical meristem and in the epidermis of bulging floral primordia. Within the L1, expression was restricted to the peripheral zone (at protein level).

It localises to the cell membrane. It is found in the cell junction. The protein resides in the plasmodesma. Functionally, modulates cell-to-cell trafficking. This Arabidopsis thaliana (Mouse-ear cress) protein is Plasmodesmata-located protein 3.